The following is a 131-amino-acid chain: MARAGPEYREWNSELIKPKKLLNPVKASRSHQELHRELLMNHKRGLGMDRKPELQRVLEHRRRNQLIKKKEEELEAKRMQCPFEQELLRRQQRLNQLENPPQREEDHAPEFIKVRENLRRITTLTSEERAL.

Residues 57-77 (VLEHRRRNQLIKKKEEELEAK) are a coiled coil. The short motif at 61–71 (RRRNQLIKKKE) is the Nuclear localization signal element.

Interacts with ACTB. Interacts with COMMD1; this interaction stabilizes COMMD1 in the nucleus. Interacts with MAP1A. Interacts with PRDX1. Interacts with F-actin.

The protein localises to the nucleus. It localises to the cytoplasm. It is found in the cytoskeleton. The protein resides in the stress fiber. Its subcellular location is the cell junction. The protein localises to the focal adhesion. It localises to the cell projection. It is found in the ruffle membrane. The protein resides in the synapse. Functionally, stress-inducible actin-binding protein that plays a role in synaptic and cognitive functions by modulating actin filamentous (F-actin) dynamics. Mediates polymerization of globular actin to F-actin. Also binds to, stabilizes and bundles F-actin. Involved in synaptic function by regulating neurite outgrowth in an actin-dependent manner and for the acquisition of hippocampus-dependent cognitive function, such as learning and long-term memory. Plays a role in the actin and microtubule cytoskeleton organization; negatively regulates focal adhesion (FA) assembly promoting malignant glial cell migration in an actin-, microtubule- and MAP1A-dependent manner. Also involved in neuroblastoma G1/S phase cell cycle progression and cell proliferation inhibition by stimulating ubiquitination of NF-kappa-B subunit RELA and NF-kappa-B degradation in a COMMD1- and actin-dependent manner. May play a role in tumor development. The sequence is that of Actin-associated protein FAM107A from Rattus norvegicus (Rat).